The following is a 1005-amino-acid chain: Mitogen-activated protein kinase kinase kinase 10 (1005 aa).

The SH3 domain occupies 32 to 96; the sequence is VSNPLWMAVF…PSNYVVSDDK (65 aa). The 263-residue stretch at 118-380 folds into the Protein kinase domain; the sequence is LNLDEIIGVG…SCILEQLTTI (263 aa). ATP is bound by residues 124-132 and K145; that span reads IGVGGFGKV. D242 functions as the Proton acceptor in the catalytic mechanism. 2 leucine-zipper regions span residues 404–425 and 439–460; these read IQQMFDELRTKEKELRSREEEL and LKRREQELAEREIDIVERELNI. Disordered regions lie at residues 551 to 611, 647 to 676, 712 to 736, and 758 to 940; these read SVLK…KHTP, QSDHRSHPEDTAHAGAPSSDSPKRGSQSRR, FQWAGRGPRRRASSPSRSMSYGEDS, and RSLI…AEGA. Composition is skewed to basic and acidic residues over residues 576-588 and 648-658; these read QKERVGGEERLKT and SDHRSHPEDTA. 2 stretches are compositionally biased toward basic and acidic residues: residues 761–786 and 799–809; these read IRSDSDDIGLDHDNVSSGRGVKEDRG and YKVESFKRDPK. Over residues 810 to 826 the composition is skewed to polar residues; that stretch reads QSLTPTHVTVGRNNTTE. Over residues 862–879 the composition is skewed to pro residues; it reads EPSPFPRLPDPHFVFPPP. A compositionally biased stretch (low complexity) spans 915–940; the sequence is SLSQTHSSSPSSGGGDACSSGSAEGA.

The protein belongs to the protein kinase superfamily. STE Ser/Thr protein kinase family. MAP kinase kinase kinase subfamily. As to quaternary structure, homodimer. Binds to the GTPase rac1 but not cdc42 or rhoA. Interacts (via kinase domain) with pak1 (via kinase domain). Interacts with the ubiquitin-conjugating enzyme ube2d4. It depends on Mg(2+) as a cofactor. Post-translationally, autophosphorylation on serine and threonine residues within the activation loop plays a role in enzyme activation. In terms of processing, mono- and poly-ubiquitinated. As to expression, in adults, strongly expressed in the brain and spleen with lower levels in pancreas, heart, muscle and kidney (at protein level). In the developing embryo, expressed at stage 22 in the cement gland. Weakly expressed in the pronephros from stage 24 or 25, with expression increasing in strength by stage 30 and continuing at least until stage 37. Expression in the developing pronephros correlates with epithelialization of the proximal pronephric tubules.

It carries out the reaction L-seryl-[protein] + ATP = O-phospho-L-seryl-[protein] + ADP + H(+). The enzyme catalyses L-threonyl-[protein] + ATP = O-phospho-L-threonyl-[protein] + ADP + H(+). With respect to regulation, homodimerization via the leucine zipper domains is required for autophosphorylation and subsequent activation. Activates the JUN N-terminal pathway. Essential for pronephros and cement gland development. This chain is Mitogen-activated protein kinase kinase kinase 10 (map3k10), found in Xenopus laevis (African clawed frog).